A 266-amino-acid polypeptide reads, in one-letter code: Hydroxyethylthiazole kinase (266 aa).

M43 provides a ligand contact to substrate. ATP contacts are provided by R119 and T166. G193 serves as a coordination point for substrate.

This sequence belongs to the Thz kinase family. The cofactor is Mg(2+).

It carries out the reaction 5-(2-hydroxyethyl)-4-methylthiazole + ATP = 4-methyl-5-(2-phosphooxyethyl)-thiazole + ADP + H(+). Its pathway is cofactor biosynthesis; thiamine diphosphate biosynthesis; 4-methyl-5-(2-phosphoethyl)-thiazole from 5-(2-hydroxyethyl)-4-methylthiazole: step 1/1. Its function is as follows. Catalyzes the phosphorylation of the hydroxyl group of 4-methyl-5-beta-hydroxyethylthiazole (THZ). The chain is Hydroxyethylthiazole kinase from Methanococcus maripaludis (strain C5 / ATCC BAA-1333).